We begin with the raw amino-acid sequence, 74 residues long: Sec-independent protein translocase protein TatA (74 aa).

Residues methionine 1–glycine 21 form a helical membrane-spanning segment. A disordered region spans residues threonine 50–glycine 74. A compositionally biased stretch (polar residues) spans valine 56 to valine 68.

Belongs to the TatA/E family. As to quaternary structure, the Tat system comprises two distinct complexes: a TatABC complex, containing multiple copies of TatA, TatB and TatC subunits, and a separate TatA complex, containing only TatA subunits. Substrates initially bind to the TatABC complex, which probably triggers association of the separate TatA complex to form the active translocon.

The protein resides in the cell inner membrane. Part of the twin-arginine translocation (Tat) system that transports large folded proteins containing a characteristic twin-arginine motif in their signal peptide across membranes. TatA could form the protein-conducting channel of the Tat system. The sequence is that of Sec-independent protein translocase protein TatA from Verminephrobacter eiseniae (strain EF01-2).